The chain runs to 353 residues: Aromatic amino acid aminotransferase (353 aa).

Lys-217 is modified (N6-(pyridoxal phosphate)lysine).

Belongs to the class-II pyridoxal-phosphate-dependent aminotransferase family. As to quaternary structure, homodimer. It depends on pyridoxal 5'-phosphate as a cofactor.

It carries out the reaction an aromatic L-alpha-amino acid + 2-oxoglutarate = an aromatic oxo-acid + L-glutamate. Functionally, aminotransferase that catalyzes the conversion of aromatic amino acids and 2-oxoglutarate into corresponding aromatic oxo acids and L-glutamate. The sequence is that of Aromatic amino acid aminotransferase from Mycobacterium tuberculosis (strain ATCC 25177 / H37Ra).